Reading from the N-terminus, the 179-residue chain is Adenine phosphoribosyltransferase (179 aa).

Belongs to the purine/pyrimidine phosphoribosyltransferase family. As to quaternary structure, homodimer.

The protein resides in the cytoplasm. It catalyses the reaction AMP + diphosphate = 5-phospho-alpha-D-ribose 1-diphosphate + adenine. Its pathway is purine metabolism; AMP biosynthesis via salvage pathway; AMP from adenine: step 1/1. In terms of biological role, catalyzes a salvage reaction resulting in the formation of AMP, that is energically less costly than de novo synthesis. The chain is Adenine phosphoribosyltransferase from Methylacidiphilum infernorum (isolate V4) (Methylokorus infernorum (strain V4)).